The primary structure comprises 137 residues: Ribosomal RNA large subunit methyltransferase H (137 aa).

Residues Leu-56, Gly-85, and 104–109 contribute to the S-adenosyl-L-methionine site; that span reads LSPLTF.

The protein belongs to the RNA methyltransferase RlmH family. As to quaternary structure, homodimer.

The protein resides in the cytoplasm. The enzyme catalyses pseudouridine(1915) in 23S rRNA + S-adenosyl-L-methionine = N(3)-methylpseudouridine(1915) in 23S rRNA + S-adenosyl-L-homocysteine + H(+). Functionally, specifically methylates the pseudouridine at position 1915 (m3Psi1915) in 23S rRNA. This Prochlorococcus marinus subsp. pastoris (strain CCMP1986 / NIES-2087 / MED4) protein is Ribosomal RNA large subunit methyltransferase H.